The sequence spans 321 residues: Thioredoxin reductase (321 aa).

Residues 11-14 (SGPA), 40-41 (TA), glutamine 45, asparagine 54, cysteine 145, aspartate 288, and 295-297 (RQA) contribute to the FAD site. An intrachain disulfide couples cysteine 142 to cysteine 145.

The protein belongs to the class-II pyridine nucleotide-disulfide oxidoreductase family. In terms of assembly, homodimer. FAD is required as a cofactor.

It is found in the cytoplasm. The catalysed reaction is [thioredoxin]-dithiol + NADP(+) = [thioredoxin]-disulfide + NADPH + H(+). The sequence is that of Thioredoxin reductase (TRR1) from Debaryomyces hansenii (strain ATCC 36239 / CBS 767 / BCRC 21394 / JCM 1990 / NBRC 0083 / IGC 2968) (Yeast).